Here is a 201-residue protein sequence, read N- to C-terminus: Glutathione peroxidase 1 (201 aa).

Serine 32 bears the Phosphoserine mark. Residue selenocysteine 47 is part of the active site. Selenocysteine 47 is a non-standard amino acid (selenocysteine). N6-acetyllysine; alternate occurs at positions 86, 112, and 146. 3 positions are modified to N6-succinyllysine; alternate: lysine 86, lysine 112, and lysine 146. Phosphoserine occurs at positions 195 and 199.

The protein belongs to the glutathione peroxidase family. Homotetramer. Interacts with MIEN1. In terms of processing, during periods of oxidative stress, Sec-47 may react with a superoxide radical, irreversibly lose hydroselenide and be converted to dehydroalanine.

Its subcellular location is the cytoplasm. The protein resides in the mitochondrion. It catalyses the reaction 2 glutathione + H2O2 = glutathione disulfide + 2 H2O. It carries out the reaction a hydroperoxy polyunsaturated fatty acid + 2 glutathione = a hydroxy polyunsaturated fatty acid + glutathione disulfide + H2O. The catalysed reaction is tert-butyl hydroperoxide + 2 glutathione = tert-butanol + glutathione disulfide + H2O. The enzyme catalyses cumene hydroperoxide + 2 glutathione = 2-phenylpropan-2-ol + glutathione disulfide + H2O. It catalyses the reaction (13S)-hydroperoxy-(9Z,11E)-octadecadienoate + 2 glutathione = (13S)-hydroxy-(9Z,11E)-octadecadienoate + glutathione disulfide + H2O. It carries out the reaction (9S)-hydroperoxy-(10E,12Z)-octadecadienoate + 2 glutathione = (9S)-hydroxy-(10E,12Z)-octadecadienoate + glutathione disulfide + H2O. The catalysed reaction is (5S)-hydroperoxy-(6E,8Z,11Z,14Z)-eicosatetraenoate + 2 glutathione = (5S)-hydroxy-(6E,8Z,11Z,14Z)-eicosatetraenoate + glutathione disulfide + H2O. The enzyme catalyses (12S)-hydroperoxy-(5Z,8Z,10E,14Z)-eicosatetraenoate + 2 glutathione = (12S)-hydroxy-(5Z,8Z,10E,14Z)-eicosatetraenoate + glutathione disulfide + H2O. It catalyses the reaction (12R)-hydroperoxy-(5Z,8Z,10E,14Z)-eicosatetraenoate + 2 glutathione = (12R)-hydroxy-(5Z,8Z,10E,14Z)-eicosatetraenoate + glutathione disulfide + H2O. It carries out the reaction (15S)-hydroperoxy-(5Z,8Z,11Z,13E)-eicosatetraenoate + 2 glutathione = (15S)-hydroxy-(5Z,8Z,11Z,13E)-eicosatetraenoate + glutathione disulfide + H2O. The catalysed reaction is (5S)-hydroperoxy-(6E,8Z,11Z,14Z,17Z)-eicosapentaenoate + 2 glutathione = (5S)-hydroxy-(6E,8Z,11Z,14Z,17Z)-eicosapentaenoate + glutathione disulfide + H2O. The enzyme catalyses (12S)-hydroperoxy-(5Z,8Z,10E,14Z,17Z)-eicosapentaenoate + 2 glutathione = (12S)-hydroxy-(5Z,8Z,10E,14Z,17Z)-eicosapentaenoate + glutathione disulfide + H2O. It catalyses the reaction (15S)-hydroperoxy-(5Z,8Z,11Z,13E,17Z)-eicosapentaenoate + 2 glutathione = (15S)-hydroxy-(5Z,8Z,11Z,13E,17Z)-eicosapentaenoate + glutathione disulfide + H2O. It carries out the reaction (15S)-hydroperoxy-(11Z,13E)-eicosadienoate + 2 glutathione = (15S)-hydroxy-(11Z,13E)-eicosadienoate + glutathione disulfide + H2O. The catalysed reaction is (17S)-hydroperoxy-(4Z,7Z,10Z,13Z,15E,19Z)-docosahexaenoate + 2 glutathione = (17S)-hydroxy-(4Z,7Z,10Z,13Z,15E,19Z)-docosahexaenoate + glutathione disulfide + H2O. Catalyzes the reduction of hydroperoxides in a glutathione-dependent manner thus regulating cellular redox homeostasis. Can reduce small soluble hydroperoxides such as H2O2, cumene hydroperoxide and tert-butyl hydroperoxide, as well as several fatty acid-derived hydroperoxides. In platelets catalyzes the reduction of 12-hydroperoxyeicosatetraenoic acid, the primary product of the arachidonate 12-lipoxygenase pathway. This chain is Glutathione peroxidase 1 (GPX1), found in Callithrix jacchus (White-tufted-ear marmoset).